We begin with the raw amino-acid sequence, 126 residues long: Aspartate 1-decarboxylase (126 aa).

Ser-25 serves as the catalytic Schiff-base intermediate with substrate; via pyruvic acid. Ser-25 carries the pyruvic acid (Ser) modification. Thr-57 contributes to the substrate binding site. Catalysis depends on Tyr-58, which acts as the Proton donor. Position 73 to 75 (73 to 75) interacts with substrate; it reads GAA.

This sequence belongs to the PanD family. In terms of assembly, heterooctamer of four alpha and four beta subunits. It depends on pyruvate as a cofactor. Post-translationally, is synthesized initially as an inactive proenzyme, which is activated by self-cleavage at a specific serine bond to produce a beta-subunit with a hydroxyl group at its C-terminus and an alpha-subunit with a pyruvoyl group at its N-terminus.

It is found in the cytoplasm. The enzyme catalyses L-aspartate + H(+) = beta-alanine + CO2. It functions in the pathway cofactor biosynthesis; (R)-pantothenate biosynthesis; beta-alanine from L-aspartate: step 1/1. Functionally, catalyzes the pyruvoyl-dependent decarboxylation of aspartate to produce beta-alanine. This chain is Aspartate 1-decarboxylase, found in Salmonella dublin (strain CT_02021853).